Reading from the N-terminus, the 497-residue chain is MGLDALVPLAVTVAIFVLLVDLMHRRQRWAARYPPGPMPLPGLGNLLHVDFQNTPNSFNQLRRRFGDVFSLQLAWTPVVVLNGLEAVREALVTRGEDTADRPPVPITEMLGFGPHSQGLFLARYGPAWREQRRFSVSTLRNLGLGKKSLEQWVTEEATYLCAAFADHAGRPFRPNGLLDKAVSNVIASLTCRRRFEYNDPCLLRLLDLTMEGLKEESGLLREVLNAIPVLLRIPGLAGKVLRSQKAFLAQLDELLTEHRMTWDPAQPPRDLTEAFLAEMEKTKGNPESSFNDENLHLVVADLFSAGMVTTSITLAWGLLLMILHPDVQRRVQQEIDDVIGRVRRPEMGDQTYMPYTTAVIHEVQRFADIVPLGVTHMTSRDIEVQGFLIPKGTTLFTNLSSVLKDEANWEKPFRFHPEHFLDAQGRFVKPEAFLPFSAGRRACLGEPLARMELFLFFTCLLQRFSFSVPAGQPRPSPHGVFAFLVTPSPYELCAVPR.

C443 serves as a coordination point for heme.

Belongs to the cytochrome P450 family. The cofactor is heme.

It localises to the endoplasmic reticulum membrane. The protein localises to the microsome membrane. It catalyses the reaction an organic molecule + reduced [NADPH--hemoprotein reductase] + O2 = an alcohol + oxidized [NADPH--hemoprotein reductase] + H2O + H(+). Responsible for the metabolism of many drugs and environmental chemicals that it oxidizes. This is Cytochrome P450 2D19 (CYP2D19) from Callithrix jacchus (White-tufted-ear marmoset).